Reading from the N-terminus, the 363-residue chain is Putative replication factor C small subunit L510 (363 aa).

ATP is bound at residue 47–54; it reads GPPGTGKT.

This sequence belongs to the activator 1 small subunits family. RfcS subfamily.

Functionally, part of the RFC clamp loader complex which loads the PCNA sliding clamp onto DNA. The chain is Putative replication factor C small subunit L510 from Acanthamoeba polyphaga mimivirus (APMV).